Here is a 275-residue protein sequence, read N- to C-terminus: MTTEQARGQQGPNLAIGRQKPPAGVVTPKSDAEEPPLTRKRSKKERGLRGSRKRTGSSGEQTGPEAPGSSNNPPSTGEGPAGAPPASPGPASSRQSHRHRPDSLHDAAQRTYGPLLNRVFGKDRELGPEELDELQAAFEEFDTDRDGYISHRELGDCMRTLGYMPTEMELLEVSQHIKMRMGGRVDFEEFVELIGPKLREETAHMLGVRELRIAFREFDRDRDGRITVAELREAVPALLGEPLAGPELDEMLREVDLNGDGTVDFDEFVMMLSRH.

Residues 1–12 (MTTEQARGQQGP) are compositionally biased toward polar residues. A disordered region spans residues 1 to 112 (MTTEQARGQQ…SLHDAAQRTY (112 aa)). Residues 38-55 (TRKRSKKERGLRGSRKRT) are compositionally biased toward basic residues. At serine 42 the chain carries Phosphoserine. 4 EF-hand domains span residues 129–164 (EELDELQAAFEEFDTDRDGYISHRELGDCMRTLGYM), 183–200 (GRVDFEEFVELIGPKLRE), 206–241 (LGVRELRIAFREFDRDRDGRITVAELREAVPALLGE), and 243–275 (LAGPELDEMLREVDLNGDGTVDFDEFVMMLSRH). The Ca(2+) site is built by aspartate 142, aspartate 144, aspartate 146, tyrosine 148, and glutamate 153. Ca(2+)-binding residues include aspartate 219, aspartate 221, aspartate 223, arginine 225, glutamate 230, aspartate 256, asparagine 258, aspartate 260, threonine 262, and glutamate 267.

In terms of assembly, interacts with CACNA1F and CACNA1D (via IQ domain) in a calcium independent manner. Interacts (via N-terminus) with UNC119. Phosphorylated. Phosphorylation levels change with the light conditions and regulate the activity. In terms of tissue distribution, expressed in retina and in the inner hair cells (IHC) of the cochlea.

Its subcellular location is the cytoplasm. It is found in the presynapse. Involved in normal synaptic function through regulation of Ca(2+) influx and neurotransmitter release in photoreceptor synaptic terminals and in auditory transmission. Modulator of CACNA1D and CACNA1F, suppressing the calcium-dependent inactivation and shifting the activation range to more hyperpolarized voltages. This is Calcium-binding protein 4 (CABP4) from Homo sapiens (Human).